The following is a 493-amino-acid chain: Vacuolar-processing enzyme (493 aa).

The first 34 residues, 1-34 (MAVHRSLLNKPTWCRVAFWWWMLVMVMRIQGTNG), serve as a signal peptide directing secretion. The propeptide occupies 35–53 (KEQDSVIKLPTQEVDAESD). His-176 is a catalytic residue. Catalysis depends on Cys-218, which acts as the Nucleophile. Cys-251 and Cys-265 are disulfide-bonded. Asn-318 carries an N-linked (GlcNAc...) asparagine glycan. Cystine bridges form between Cys-429/Cys-459 and Cys-441/Cys-476.

Belongs to the peptidase C13 family.

In terms of biological role, asparagine-specific endopeptidase involved in the processing of vacuolar seed protein precursors into the mature forms. The sequence is that of Vacuolar-processing enzyme from Phaseolus vulgaris (Kidney bean).